Consider the following 166-residue polypeptide: Large ribosomal subunit protein uL10 (166 aa).

It belongs to the universal ribosomal protein uL10 family. In terms of assembly, part of the ribosomal stalk of the 50S ribosomal subunit. The N-terminus interacts with L11 and the large rRNA to form the base of the stalk. The C-terminus forms an elongated spine to which L12 dimers bind in a sequential fashion forming a multimeric L10(L12)X complex.

Functionally, forms part of the ribosomal stalk, playing a central role in the interaction of the ribosome with GTP-bound translation factors. This Aromatoleum aromaticum (strain DSM 19018 / LMG 30748 / EbN1) (Azoarcus sp. (strain EbN1)) protein is Large ribosomal subunit protein uL10.